We begin with the raw amino-acid sequence, 387 residues long: 3-ketoacyl-CoA thiolase (387 aa).

C91 acts as the Acyl-thioester intermediate in catalysis. Active-site proton acceptor residues include H343 and C373.

This sequence belongs to the thiolase-like superfamily. Thiolase family. As to quaternary structure, heterotetramer of two alpha chains (FadB) and two beta chains (FadA).

Its subcellular location is the cytoplasm. The enzyme catalyses an acyl-CoA + acetyl-CoA = a 3-oxoacyl-CoA + CoA. The protein operates within lipid metabolism; fatty acid beta-oxidation. Its function is as follows. Catalyzes the final step of fatty acid oxidation in which acetyl-CoA is released and the CoA ester of a fatty acid two carbons shorter is formed. In Escherichia coli O139:H28 (strain E24377A / ETEC), this protein is 3-ketoacyl-CoA thiolase.